Consider the following 238-residue polypeptide: Opacity protein opA60 (238 aa).

Residue alanine 1 is a signal peptide.

This sequence belongs to the opacity porin family.

It is found in the cell outer membrane. In terms of biological role, implicated in a number of adherence functions. OPA proteins are implicated in pathogenesis and are subject to phase variation. This Neisseria gonorrhoeae protein is Opacity protein opA60 (opaH).